An 84-amino-acid polypeptide reads, in one-letter code: Dolichol phosphate-mannose biosynthesis regulatory protein (84 aa).

2 helical membrane passes run Leu11–Leu31 and Tyr49–Ile69.

It belongs to the DPM2 family. As to quaternary structure, component of the dolichol-phosphate mannose (DPM) synthase complex composed of DPM1, DPM2 and DPM3; in the complex interacts directly with DPM3. Component of the glycosylphosphatidylinositol-N-acetylglucosaminyltransferase (GPI-GnT) complex composed at least by PIGA, PIGC, PIGH, PIGP, PIGQ, PIGY and DPM2. Interacts with PIGA, PIGC and PIGQ.

Its subcellular location is the endoplasmic reticulum membrane. The protein operates within protein modification; protein glycosylation. Regulates the biosynthesis of dolichol phosphate-mannose. Regulatory subunit of the dolichol-phosphate mannose (DPM) synthase complex; essential for the ER localization and stable expression of DPM1. Part of the glycosylphosphatidylinositol-N-acetylglucosaminyltransferase (GPI-GnT) complex that catalyzes the transfer of N-acetylglucosamine from UDP-N-acetylglucosamine to phosphatidylinositol and participates in the first step of GPI biosynthesis. May act by regulating the GPI-GNT complex. This is Dolichol phosphate-mannose biosynthesis regulatory protein from Bos taurus (Bovine).